The primary structure comprises 255 residues: MQGQSQQQAYDRGITIFSPDGRLYQVEYAREAVKRGTASIGIRTEDGVVLVVDKRIRSPLMERTSVEKIHKADDHIGIASAGHVADARQLIDFARRQAQVNQLRYDEPIGVETLTKAVTDHIQQYTQVGGARPFGVALIIGGIEDGEPRLYETDPSGTPYEWQALAVGADRGDIQEYLEEHYSESLDTEAGIGLALEALASVNDDSLTPEGIGLATVTVDDDDGFSQLSDEEIEAHLEERDLLEAEDDADEDDEE.

It belongs to the peptidase T1A family. As to quaternary structure, the 20S proteasome core is composed of 14 alpha and 14 beta subunits that assemble into four stacked heptameric rings, resulting in a barrel-shaped structure. The two inner rings, each composed of seven catalytic beta subunits, are sandwiched by two outer rings, each composed of seven alpha subunits. The catalytic chamber with the active sites is on the inside of the barrel. Has a gated structure, the ends of the cylinder being occluded by the N-termini of the alpha-subunits. Is capped at one or both ends by the proteasome regulatory ATPase, PAN.

The protein resides in the cytoplasm. Its activity is regulated as follows. The formation of the proteasomal ATPase PAN-20S proteasome complex, via the docking of the C-termini of PAN into the intersubunit pockets in the alpha-rings, triggers opening of the gate for substrate entry. Interconversion between the open-gate and close-gate conformations leads to a dynamic regulation of the 20S proteasome proteolysis activity. In terms of biological role, component of the proteasome core, a large protease complex with broad specificity involved in protein degradation. This is Proteasome subunit alpha from Natronomonas pharaonis (strain ATCC 35678 / DSM 2160 / CIP 103997 / JCM 8858 / NBRC 14720 / NCIMB 2260 / Gabara) (Halobacterium pharaonis).